The chain runs to 354 residues: Holliday junction branch migration complex subunit RuvB (354 aa).

The disordered stretch occupies residues 1–22 (MTIQTDDFAPAPPRVVSAAPAS). The tract at residues 5 to 193 (TDDFAPAPPR…FGIVARLEFY (189 aa)) is large ATPase domain (RuvB-L). ATP-binding positions include L32, R33, G74, K77, T78, T79, 140 to 142 (EDY), R183, Y193, and R230. Residue T78 coordinates Mg(2+). Residues 194–264 (TPEELALIVR…IAHKALVMLD (71 aa)) are small ATPAse domain (RuvB-S). A head domain (RuvB-H) region spans residues 267 to 354 (PQGFDLMDRK…RSDGQDLFGI (88 aa)). The DNA site is built by R303, R322, and R327.

This sequence belongs to the RuvB family. As to quaternary structure, homohexamer. Forms an RuvA(8)-RuvB(12)-Holliday junction (HJ) complex. HJ DNA is sandwiched between 2 RuvA tetramers; dsDNA enters through RuvA and exits via RuvB. An RuvB hexamer assembles on each DNA strand where it exits the tetramer. Each RuvB hexamer is contacted by two RuvA subunits (via domain III) on 2 adjacent RuvB subunits; this complex drives branch migration. In the full resolvosome a probable DNA-RuvA(4)-RuvB(12)-RuvC(2) complex forms which resolves the HJ.

The protein localises to the cytoplasm. The catalysed reaction is ATP + H2O = ADP + phosphate + H(+). The RuvA-RuvB-RuvC complex processes Holliday junction (HJ) DNA during genetic recombination and DNA repair, while the RuvA-RuvB complex plays an important role in the rescue of blocked DNA replication forks via replication fork reversal (RFR). RuvA specifically binds to HJ cruciform DNA, conferring on it an open structure. The RuvB hexamer acts as an ATP-dependent pump, pulling dsDNA into and through the RuvAB complex. RuvB forms 2 homohexamers on either side of HJ DNA bound by 1 or 2 RuvA tetramers; 4 subunits per hexamer contact DNA at a time. Coordinated motions by a converter formed by DNA-disengaged RuvB subunits stimulates ATP hydrolysis and nucleotide exchange. Immobilization of the converter enables RuvB to convert the ATP-contained energy into a lever motion, pulling 2 nucleotides of DNA out of the RuvA tetramer per ATP hydrolyzed, thus driving DNA branch migration. The RuvB motors rotate together with the DNA substrate, which together with the progressing nucleotide cycle form the mechanistic basis for DNA recombination by continuous HJ branch migration. Branch migration allows RuvC to scan DNA until it finds its consensus sequence, where it cleaves and resolves cruciform DNA. The chain is Holliday junction branch migration complex subunit RuvB from Variovorax paradoxus (strain S110).